The sequence spans 122 residues: MNFIRENETKYVLSTYQSMTPKNLMEYLLKYNYDNDCVYIFNNLPKDLQKEVDDLAKEVVKANDEQIKAQDEQIKANDQKLKQLDVMIEFMKQYNKQLDNDIYLLEHQLENKRELNRQLGIF.

Positions 46 to 116 form a coiled coil; the sequence is KDLQKEVDDL…HQLENKRELN (71 aa).

This is an uncharacterized protein from Invertebrate iridescent virus 6 (IIV-6).